A 312-amino-acid chain; its full sequence is Ribonuclease HIII (312 aa).

The RNase H type-2 domain maps to 95 to 311 (FNCIGSDEAG…REKAQKILKP (217 aa)). Residues Asp-101, Glu-102, and Asp-206 each coordinate a divalent metal cation.

Belongs to the RNase HII family. RnhC subfamily. It depends on Mn(2+) as a cofactor. Mg(2+) serves as cofactor.

It localises to the cytoplasm. The catalysed reaction is Endonucleolytic cleavage to 5'-phosphomonoester.. Functionally, endonuclease that specifically degrades the RNA of RNA-DNA hybrids. The polypeptide is Ribonuclease HIII (Staphylococcus aureus (strain Mu3 / ATCC 700698)).